The primary structure comprises 299 residues: Glutamyl-Q tRNA(Asp) synthetase (299 aa).

L-glutamate is bound by residues 18–22 (RFAPS) and E54. The 'HIGH' region motif lies at 21-31 (PSPSGALHFGS). Zn(2+) is bound by residues C110, C112, Y124, and C128. Residues Y181 and R199 each coordinate L-glutamate. The 'KMSKS' region signature appears at 237-241 (KLSKQ). K240 serves as a coordination point for ATP.

Belongs to the class-I aminoacyl-tRNA synthetase family. GluQ subfamily. Requires Zn(2+) as cofactor.

Functionally, catalyzes the tRNA-independent activation of glutamate in presence of ATP and the subsequent transfer of glutamate onto a tRNA(Asp). Glutamate is transferred on the 2-amino-5-(4,5-dihydroxy-2-cyclopenten-1-yl) moiety of the queuosine in the wobble position of the QUC anticodon. The polypeptide is Glutamyl-Q tRNA(Asp) synthetase (Shewanella oneidensis (strain ATCC 700550 / JCM 31522 / CIP 106686 / LMG 19005 / NCIMB 14063 / MR-1)).